Reading from the N-terminus, the 250-residue chain is ATP synthase subunit a (250 aa).

Helical transmembrane passes span 29–49 (ASLFMAASAAVAVGFLYFATS), 84–104 (FFPLVFSLFMFVLTANLLGMF), 114–134 (IIVTFALAILVIGTVLVYGFY), 143–163 (VFVPSGVPGILLPLVVSIEII), 193–213 (FVASLGALGAVGVGGAVLPLI), and 216–236 (VALTGLEFLVAFLQAYVFAVL).

The protein belongs to the ATPase A chain family. As to quaternary structure, F-type ATPases have 2 components, CF(1) - the catalytic core - and CF(0) - the membrane proton channel. CF(1) has five subunits: alpha(3), beta(3), gamma(1), delta(1), epsilon(1). CF(0) has three main subunits: a(1), b(2) and c(9-12). The alpha and beta chains form an alternating ring which encloses part of the gamma chain. CF(1) is attached to CF(0) by a central stalk formed by the gamma and epsilon chains, while a peripheral stalk is formed by the delta and b chains.

Its subcellular location is the cell inner membrane. Functionally, key component of the proton channel; it plays a direct role in the translocation of protons across the membrane. This Rhizobium leguminosarum bv. trifolii (strain WSM2304) protein is ATP synthase subunit a.